The chain runs to 1147 residues: Nucleolar protein 8 (1147 aa).

The 82-residue stretch at lysine 8 to glutamate 89 folds into the RRM domain. A Glycyl lysine isopeptide (Lys-Gly) (interchain with G-Cter in SUMO2) cross-link involves residue lysine 225. 2 positions are modified to phosphoserine: serine 300 and serine 306. Residue lysine 316 forms a Glycyl lysine isopeptide (Lys-Gly) (interchain with G-Cter in SUMO2) linkage. Tyrosine 362 bears the Phosphotyrosine mark. Phosphoserine is present on residues serine 364 and serine 365. Phosphothreonine is present on threonine 367. A disordered region spans residues lysine 379–lysine 401. Over residues serine 383 to glutamine 400 the composition is skewed to polar residues. Phosphoserine is present on serine 416. 7 disordered regions span residues lysine 427–lysine 452, alanine 472–asparagine 511, methionine 592–alanine 659, lysine 686–glutamine 741, alanine 766–glutamate 888, lysine 932–leucine 963, and serine 986–cysteine 1017. Residues aspartate 441–glutamate 450 are compositionally biased toward acidic residues. Polar residues-rich tracts occupy residues methionine 592–glutamine 610 and threonine 629–proline 650. Basic and acidic residues-rich tracts occupy residues serine 700–glutamine 714 and alanine 732–glutamine 741. Serine 704 is modified (phosphoserine). Threonine 777 bears the Phosphothreonine mark. Residues serine 783 and serine 787 each carry the phosphoserine modification. Positions cysteine 799–valine 809 are enriched in basic and acidic residues. Phosphoserine is present on residues serine 819, serine 820, serine 825, serine 827, and serine 872. Residues serine 857 to lysine 883 show a composition bias toward basic and acidic residues. Coiled coils occupy residues leucine 868–asparagine 898 and isoleucine 937–leucine 963. Basic and acidic residues predominate over residues aspartate 994–asparagine 1011. A Glycyl lysine isopeptide (Lys-Gly) (interchain with G-Cter in SUMO2) cross-link involves residue lysine 1038. Positions proline 1055–proline 1086 are disordered. Serine 1063, serine 1064, serine 1065, and serine 1080 each carry phosphoserine.

As to quaternary structure, interacts with the GTP form of RRAGA, RRAGC and RRAGD. Interacts with NIP7. Interacts with DDX18; the interaction is RNA-dependent. Interacts with DDX47; the interaction is RNA-dependent. Phosphorylated.

The protein resides in the nucleus. Its subcellular location is the nucleolus. Its function is as follows. Plays an essential role in the survival of diffuse-type gastric cancer cells. Acts as a nucleolar anchoring protein for DDX47. May be involved in regulation of gene expression at the post-transcriptional level or in ribosome biogenesis in cancer cells. This is Nucleolar protein 8 from Mus musculus (Mouse).